The sequence spans 408 residues: Interferon-activable protein 203 (408 aa).

Positions 1–87 (MAEYKNIVLL…AKKLKTEKAK (87 aa)) constitute a Pyrin domain. The segment at 84–208 (EKAKVQEKKK…EGHHQGPKQV (125 aa)) is disordered. Positions 92 to 102 (KKGKCKTAGKK) are enriched in basic residues. The segment covering 150 to 159 (AQLPETSGTN) has biased composition (polar residues). The 199-residue stretch at 190–388 (TVPKEPSREE…SVRHSYMQVI (199 aa)) folds into the HIN-200 domain.

The protein belongs to the HIN-200 family. In terms of tissue distribution, constitutively expressed in the thymus, bone marrow and spleen. Isoform 1 and isoform 3 are present in liver (at protein level).

Its subcellular location is the nucleus. This Mus musculus (Mouse) protein is Interferon-activable protein 203 (Ifi203).